The following is a 294-amino-acid chain: tRNA-uridine aminocarboxypropyltransferase 1 (294 aa).

A disordered region spans residues 158–185; it reads DMQNDSSCEPSLKRPKCSQQYDKSKNEG. Residues 202–205 carry the DXTW motif; sequence DSTW.

Belongs to the TDD superfamily. DTWD1 family.

The protein resides in the nucleus. The catalysed reaction is a uridine in tRNA + S-adenosyl-L-methionine = a 3-[(3S)-3-amino-3-carboxypropyl]uridine in tRNA + S-methyl-5'-thioadenosine + H(+). In terms of biological role, catalyzes the formation of 3-(3-amino-3-carboxypropyl)uridine (acp3U) at position 20 in the D-loop of several cytoplasmic tRNAs (acp3U(20)). In Xenopus tropicalis (Western clawed frog), this protein is tRNA-uridine aminocarboxypropyltransferase 1.